Reading from the N-terminus, the 306-residue chain is MEITFFGTSAGLPTKERNTQAIALNLEPYSNNIWLFDVGEGTQHQILHHSIKLGKVDHIFITHMHGDHIFGLPGLLTSRSFQGGEGKPLTLIGPKGIKAYIETTLRLSESKLNYPITYIEIENHLSYQNNGFNVEAHMLNHGIPSFGYRIEAPYTSGKIDVSALKEIGLEPGPKYQDVKNNETFEYNGIIYNSKDFKGDAVKGPVIAIFGDTMPCQNEEIIADHANVMVHESTYIEGDKSLANNYHHSHIEDVFTLIENAHVDYSLITHMSNRYTIEEVETISKSLKSLPTTPPFKFVKDFDSWSF.

Residues H63, H65, D67, H68, H141, D211, and H269 each coordinate Zn(2+). D67 acts as the Proton acceptor in catalysis.

The protein belongs to the RNase Z family. As to quaternary structure, homodimer. Zn(2+) is required as a cofactor.

It catalyses the reaction Endonucleolytic cleavage of RNA, removing extra 3' nucleotides from tRNA precursor, generating 3' termini of tRNAs. A 3'-hydroxy group is left at the tRNA terminus and a 5'-phosphoryl group is left at the trailer molecule.. Zinc phosphodiesterase, which displays some tRNA 3'-processing endonuclease activity. Probably involved in tRNA maturation, by removing a 3'-trailer from precursor tRNA. The polypeptide is Ribonuclease Z (Staphylococcus saprophyticus subsp. saprophyticus (strain ATCC 15305 / DSM 20229 / NCIMB 8711 / NCTC 7292 / S-41)).